Reading from the N-terminus, the 146-residue chain is Globin-2B (146 aa).

Residues Gln-9–Leu-146 enclose the Globin domain. His-101 lines the heme b pocket.

The protein belongs to the globin family. In terms of assembly, homodimer.

This is Globin-2B from Anadara trapezia (Sydney cockle).